A 447-amino-acid chain; its full sequence is Pyruvate kinase (447 aa).

Arg33 provides a ligand contact to substrate. The K(+) site is built by Asn35, Ser37, and Asp61. 35–38 (NMSH) provides a ligand contact to ATP. ATP is bound at residue Arg68. A Mg(2+)-binding site is contributed by Glu203. The substrate site is built by Gly226, Asp227, and Thr259. Asp227 lines the Mg(2+) pocket.

The protein belongs to the pyruvate kinase family. Homotetramer. The cofactor is Mg(2+). K(+) serves as cofactor.

It carries out the reaction pyruvate + ATP = phosphoenolpyruvate + ADP + H(+). It functions in the pathway carbohydrate degradation; glycolysis; pyruvate from D-glyceraldehyde 3-phosphate: step 5/5. The polypeptide is Pyruvate kinase (Methanocaldococcus jannaschii (strain ATCC 43067 / DSM 2661 / JAL-1 / JCM 10045 / NBRC 100440) (Methanococcus jannaschii)).